The chain runs to 239 residues: Norbelladine 4'-O-methyltransferase 3 (239 aa).

Residues Val55, Glu77, Gly79 to Val80, Ser85, Asp103, and Ala132 each bind S-adenosyl-L-methionine. Residue Asp155 participates in a divalent metal cation binding. Asp157 provides a ligand contact to S-adenosyl-L-methionine. Asp181 and Asn182 together coordinate a divalent metal cation.

The protein belongs to the class I-like SAM-binding methyltransferase superfamily. Cation-dependent O-methyltransferase family. Requires Mg(2+) as cofactor.

The catalysed reaction is norbelladine + S-adenosyl-L-methionine = 4'-O-methylnorbelladine + S-adenosyl-L-homocysteine + H(+). It participates in alkaloid biosynthesis. In terms of biological role, 4'-O-methyltransferase converting norbelladine to 4'-O-methylnorbelladine. 4'-O-methylnorbelladine is a precursor to all Amaryllidaceae alkaloids such as galanthamine, lycorine and haemanthamine, and including haemanthamine- and crinamine-type alkaloids, promising anticancer agents. In Narcissus aff. pseudonarcissus MK-2014 (Daffodil), this protein is Norbelladine 4'-O-methyltransferase 3.